We begin with the raw amino-acid sequence, 465 residues long: Probable dipeptidase A (465 aa).

The active site involves Cys-3.

Belongs to the peptidase C69 family.

It carries out the reaction an L-aminoacyl-L-amino acid + H2O = 2 an L-alpha-amino acid. This Streptococcus pyogenes serotype M3 (strain SSI-1) protein is Probable dipeptidase A (pepDA).